Consider the following 802-residue polypeptide: Osmosensitive cation channel TMEM63C (802 aa).

Over 1-35 (MSAFPDSMDQKFHNMTVNECFQSRSTVLQGQPFGG) the chain is Extracellular. The helical transmembrane segment at 36–60 (IPTVLVLNIILWVFVVLLYSFLRKA) threads the bilayer. Residues 61-124 (AWDYGRLALL…RDRDLINKCG (64 aa)) lie on the Cytoplasmic side of the membrane. Residues Ser-75 and Ser-78 each carry the phosphoserine modification. Residues 125 to 157 (DDARIYITFQYHLIIFVLILCIPSLGIILPVNY) traverse the membrane as a helical segment. At 158–180 (IGTVLDWNSHFGRTTIVNVSTES) the chain is on the extracellular side. A helical membrane pass occupies residues 181–205 (KFLWLHSLFAFLYFLINLAFMGHHC). At 206 to 401 (LGFVPKKSLH…IIWKHLSIRR (196 aa)) the chain is on the cytoplasmic side. A helical transmembrane segment spans residues 402-431 (FSWWTRFIAINTFLFFLFFFLTTPAIIINT). The Extracellular segment spans residues 432-446 (IDIYNVTRPIEKLQS). A helical transmembrane segment spans residues 447 to 476 (PIVTQFFPSVLLWAFTVTMPLLVYLSAFLE). At 477–480 (AHWT) the chain is on the cytoplasmic side. A helical transmembrane segment spans residues 481–517 (RSSQNLIIVHKCYIFLVFMVVILPSMGLTSLHVFLRW). Residues 518–540 (LFDIYYLEHATIRFQCVFLPDNG) lie on the Extracellular side of the membrane. Residues 541 to 573 (AFFINYVITAALLGTGMELMRLGSLCTYCTRLF) traverse the membrane as a helical segment. Residues 574 to 593 (LSKSEPERVHIRKNQATDFQ) are Cytoplasmic-facing. Residues 594–612 (FGREYAWMLNVFSVVMAYS) traverse the membrane as a helical segment. The Extracellular portion of the chain corresponds to 613 to 615 (ITC). The chain crosses the membrane as a helical span at residues 616 to 640 (PIIVPFGLLYLCMKHITDRYNMYYS). At 641-647 (YAPTKLN) the chain is on the cytoplasmic side. Residues 648 to 676 (AQIHMAAVYQAIFAPLLGLFWMLFFSILR) form a helical membrane-spanning segment. Residues 677–681 (VGSLH) lie on the Extracellular side of the membrane. A helical membrane pass occupies residues 682–702 (SITLFSMSSLIISVVIAFSGV). At 703-802 (FLGKLRIAQR…EGLEMEGQSH (100 aa)) the chain is on the cytoplasmic side. The disordered stretch occupies residues 753 to 785 (TPASSPARHTYGTINSQPEEGEEESGLRGFARE).

The protein belongs to the CSC1 (TC 1.A.17) family. In terms of assembly, monomer.

The protein resides in the endoplasmic reticulum membrane. It localises to the cell membrane. It carries out the reaction Ca(2+)(in) = Ca(2+)(out). Acts as an osmosensitive cation channel preferentially activated upon hypotonic stress. In contrast to TMEM63B, does not show phospholipid scramblase activity. Enriched in mitochondria-ER contact sites where it may regulate the metabolite flux and organelles' morphologies in response to osmotic changes. In particular may regulate mitochondrial motility and function in motor neuron axons. Required for the functional integrity of the kidney glomerular filtration barrier. In Mus musculus (Mouse), this protein is Osmosensitive cation channel TMEM63C.